The chain runs to 233 residues: Inner kinetochore subunit fta4 (233 aa).

Phosphothreonine occurs at positions 189 and 191.

Belongs to the NKP1 family. In terms of assembly, component of the inner kinetochore constitutive centromere-associated network (CCAN) (also known as central kinetochore Sim4 complex in fission yeast), which is composed of at least cnl2, cnp3, cnp20, fta1, fta2, fta3, fta4, fta6, fta7, mal2, mhf1, mhf2, mis6, mis15, mis17, sim4 and wip1.

Its subcellular location is the nucleus. It is found in the chromosome. It localises to the centromere. The protein resides in the kinetochore. Component of the kinetochore, a multiprotein complex that assembles on centromeric DNA and attaches chromosomes to spindle microtubules, mediating chromosome segregation and sister chromatid segregation during meiosis and mitosis. Component of the inner kinetochore constitutive centromere-associated network (CCAN), which serves as a structural platform for outer kinetochore assembly. Fta2, fta3 and fta4 associate with the central core (cnt) and inner repeat (inr) region of the centromere. The protein is Inner kinetochore subunit fta4 (fta4) of Schizosaccharomyces pombe (strain 972 / ATCC 24843) (Fission yeast).